Reading from the N-terminus, the 354-residue chain is Ferrochelatase (354 aa).

Positions 204 and 306 each coordinate Fe cation.

The protein belongs to the ferrochelatase family.

Its subcellular location is the cytoplasm. It carries out the reaction heme b + 2 H(+) = protoporphyrin IX + Fe(2+). It participates in porphyrin-containing compound metabolism; protoheme biosynthesis; protoheme from protoporphyrin-IX: step 1/1. In terms of biological role, catalyzes the ferrous insertion into protoporphyrin IX. The sequence is that of Ferrochelatase from Coxiella burnetii (strain CbuK_Q154) (Coxiella burnetii (strain Q154)).